The primary structure comprises 24 residues: Brevinin-1PTb (24 aa).

A disulfide bridge links C18 with C24.

As to expression, expressed by the skin glands.

The protein resides in the secreted. Its function is as follows. Has antibacterial activity against the Gram-positive bacterium S.aureus ATCC 25923 and the Gram-negative bacterium E.coli ATCC 25726. This chain is Brevinin-1PTb, found in Pulchrana picturata (Malaysian fire frog).